The primary structure comprises 384 residues: Protein cutoff (384 aa).

It belongs to the DXO/Dom3Z family. In terms of assembly, component of the Rhino-Deadlock-Cutoff (RDC) complex, composed of rhi/rhino, del/deadlock and cuff/cutoff. Interacts with rhi/rhino; this interaction is indirect and is mediated by del/deadlock. Interacts with del/deadlock (via C-terminal); this interaction is direct. Interacts with Rat1.

The protein resides in the cytoplasm. It localises to the nucleus. Its subcellular location is the chromosome. Functionally, involved in the piRNA pathway in germline tissues. Part of the Rhino-Deadlock-Cutoff (RDC) complex that stimulates piRNA biogenesis from chromatin regions corresponding to dual-strand, but not single-stranded, piRNA clusters. Promotes transcription of long piRNA precursors by preventing termination at canonical poly(A) sites. As part of the RDC complex, is recruited to chromatin enriched in histone modification H3K9me3 and might contribute to complex interaction by binding nascent transcript nucleic acid chains. Associates with chromatin upon exposure to homologous piRNA. Suppresses cleavage at canonical poly(A) sites by blocking recruitment of the cleavage and polyadenylation specificity factor (CPSF) complex and prevents transcriptional termination by RNA polymerase II, facilitating transcriptional read-through. As part of the RDC complex, involved in suppression of splicing. Catalytically inactive, lacking 5'-3' exonuclease and pyrophosphohydrolase activities. Stabilizes uncapped piRNA precursors in the nucleus, probably by sequestering or blocking the exonuclease activity of Rat1. May also be involved in siRNA biogenesis from dual-strand piRNA clusters. The protein is Protein cutoff (cuff) of Drosophila melanogaster (Fruit fly).